The following is a 553-amino-acid chain: Pumilio domain-containing protein 5 (553 aa).

8 Pumilio repeats span residues 146–184 (DVVSNGSLIDFAMDRTGVKFLERHFPEDHDNEMHFVLFD), 185–223 (KLTEQGAVFTSLCRSAAGNFIIQKFVEHATLDEQERLVR), 224–260 (KMCDNGLIEMCLDKFACRVVQMSIQKFDVSIAMKLVE), 261–296 (KISSLDFLPLCTDQCAIHVLQKVVKLLPISAWSFFV), 297–335 (KFLCRDDNLMTVCQDKYGCRLVQQTIDKLSDNPKLHCFN), 347–384 (SVARNCFRLSSNEFANYVVQYVIKSSGVMEMYRDTIIE), 386–421 (CLLRNILSMSQDKYASHVVEGAFLFAPPLLLSEMMD), and 432–472 (ETNR…KMVA). Residues 499–514 (FSSGKKIIESLQKLNV) form an RNA-binding region.

As to expression, detected in differentiating oocytes with highest levels observed in developing ooctyes in the distal portion of the proximal gonad.

It localises to the cytoplasm. It is found in the P-body. In terms of biological role, RNA-binding protein that binds to the consensus sequence 5'-CUCUGUAUCUUGU-3' in mRNA 3'-UTRs and modulates mRNA expression and stability. Functions redundantly with puf-6 and puf-7 in oocyte formation and organization, early embryonic cell divisions, and repression of expression of glp-1 and other maternal mRNAs in late oogenesis. This chain is Pumilio domain-containing protein 5, found in Caenorhabditis elegans.